The sequence spans 789 residues: Leucine-rich repeat and fibronectin type-III domain-containing protein 2 (789 aa).

Positions 1 to 20 are cleaved as a signal peptide; the sequence is METLLGGLLAFGMAFAVVDA. In terms of domain architecture, LRRNT spans 21–52; it reads CPKYCVCQNLSESLGTLCPSKGLLFVPPDIDR. Residues 21–534 are Extracellular-facing; sequence CPKYCVCQNL…MHSQILGGTM (514 aa). Asn-29 carries N-linked (GlcNAc...) asparagine glycosylation. 7 LRR repeats span residues 53-74, 77-98, 101-122, 125-146, 150-171, 174-195, and 198-219; these read RTVE…DFAN, GLVD…SFLD, SLRS…TLRG, NLQH…AFED, TLED…SVRR, NLHQ…TFAD, and KLAR…PIFA. The LRRCT domain maps to 242 to 288; sequence NPLHCNCELLWLRRLERDDDLETCGSPGGLKGRYFWHVREEEFVCEP. An Ig-like domain is found at 289 to 375; the sequence is PLITQHTHKL…GEATAMVEVS (87 aa). Cys-310 and Cys-359 are oxidised to a cystine. Residues Asn-332, Asn-341, and Asn-384 are each glycosylated (N-linked (GlcNAc...) asparagine). The tract at residues 383-424 is disordered; sequence SNSTSRTAPPKSRLSDITGSSKTSRGGGGSGGGEPPKSPPER. Positions 407–416 are enriched in gly residues; it reads RGGGGSGGGE. A Fibronectin type-III domain is found at 421–518; sequence PPERAVLVSE…GCAQFFTKAD (98 aa). The helical transmembrane segment at 535-555 threads the bilayer; it reads ILVIGGIIVATLLVFIVILMV. The Cytoplasmic segment spans residues 556 to 789; that stretch reads RYKVCNHEAP…SSEWVMESTV (234 aa). Disordered stretches follow at residues 577–602, 619–654, and 668–702; these read SQTN…PPKV, SDSS…PSLD, and QRKE…LGPP. Residues 583-599 are compositionally biased toward pro residues; the sequence is QPPPPSSAPAGAPPQGP. Residues 619-638 show a composition bias toward low complexity; the sequence is SDSSSSSSLGSGEAAGLGRA. Residues 641–650 show a composition bias toward pro residues; the sequence is RIPPSAPRPK. The PDZ-binding motif lies at 786–789; the sequence is ESTV.

Belongs to the LRFN family. Forms heteromeric complexes with LRFN1, LRFN3, LRFN4 and LRFN5. Can form homomeric complexes, but not across cell junctions. Directly interacts with 2 NMDA receptor subunits GRIN1 and GRIN2A. Interacts with DLG1, DLG2, DLG3 and DLG4. In terms of processing, glycosylated.

The protein localises to the membrane. It is found in the synapse. The protein resides in the postsynaptic cell membrane. Functionally, promotes neurite outgrowth in hippocampal neurons. Enhances the cell surface expression of 2 NMDA receptor subunits GRIN1 and GRIN2A. May play a role in redistributing DLG4 to the cell periphery. This is Leucine-rich repeat and fibronectin type-III domain-containing protein 2 (LRFN2) from Homo sapiens (Human).